Consider the following 526-residue polypeptide: Peptide chain release factor 3 (526 aa).

The region spanning 9 to 277 (DKRRTFAIIS…GIVEWAPKPL (269 aa)) is the tr-type G domain. Residues 18–25 (SHPDAGKT), 86–90 (DTPGH), and 140–143 (NKLD) each bind GTP.

It belongs to the TRAFAC class translation factor GTPase superfamily. Classic translation factor GTPase family. PrfC subfamily.

The protein localises to the cytoplasm. In terms of biological role, increases the formation of ribosomal termination complexes and stimulates activities of RF-1 and RF-2. It binds guanine nucleotides and has strong preference for UGA stop codons. It may interact directly with the ribosome. The stimulation of RF-1 and RF-2 is significantly reduced by GTP and GDP, but not by GMP. This is Peptide chain release factor 3 from Shewanella baltica (strain OS223).